Reading from the N-terminus, the 459-residue chain is ADP-specific phosphofructokinase (459 aa).

The ADPK domain maps to 1 to 457 (MMEFLKDFQK…FASYLSLLKR (457 aa)). 3 residues coordinate Mg(2+): E268, E298, and D441. The active-site Proton acceptor is the D441.

It belongs to the carbohydrate kinase PfkC family. The cofactor is Mg(2+).

It is found in the cytoplasm. The catalysed reaction is beta-D-fructose 6-phosphate + ADP = beta-D-fructose 1,6-bisphosphate + AMP + H(+). It functions in the pathway carbohydrate degradation; glycolysis. Catalyzes the phosphorylation of fructose 6-phosphate to fructose 1,6-bisphosphate using ADP as the phosphate donor. This chain is ADP-specific phosphofructokinase, found in Thermococcus litoralis.